We begin with the raw amino-acid sequence, 268 residues long: Inositol monophosphatase 3 (268 aa).

Glu-71, Asp-91, Leu-93, and Asp-94 together coordinate Mg(2+). Glu-71 lines the substrate pocket. Residues Leu-93–Thr-96, Gly-194–Cys-196, Glu-213, and Asp-221 contribute to the substrate site. Asp-221 is a binding site for Mg(2+).

It belongs to the inositol monophosphatase superfamily. Mg(2+) is required as a cofactor. As to expression, expressed in the shoot apex, roots, stems, leaves, flowers and young and mature green fruits.

The enzyme catalyses a myo-inositol phosphate + H2O = myo-inositol + phosphate. It functions in the pathway polyol metabolism; myo-inositol biosynthesis; myo-inositol from D-glucose 6-phosphate: step 2/2. Responsible for the provision of inositol required for synthesis of phosphatidylinositol and polyphosphoinositides. This chain is Inositol monophosphatase 3 (IMP3), found in Solanum lycopersicum (Tomato).